Consider the following 744-residue polypeptide: Eukaryotic translation initiation factor 3 subunit B (744 aa).

The disordered stretch occupies residues 1–20 (MAPSFDHLPDPEEDEYDEEE). A compositionally biased stretch (acidic residues) spans 11-20 (PEEDEYDEEE). Residues 40-126 (TFVVIDGLPE…HTLRVNKLTD (87 aa)) enclose the RRM domain. WD repeat units lie at residues 193 to 232 (DRQH…RQKR), 234 to 290 (AHPF…PLRS), 307 to 348 (PVKR…LLDK), and 577 to 622 (ADHY…LREE). The segment covering 699 to 714 (EREDAGLPRDPLEPLK) has biased composition (basic and acidic residues). Residues 699–722 (EREDAGLPRDPLEPLKSKMASGDE) form a disordered region.

Belongs to the eIF-3 subunit B family. Component of the eukaryotic translation initiation factor 3 (eIF-3) complex.

It is found in the cytoplasm. Its function is as follows. RNA-binding component of the eukaryotic translation initiation factor 3 (eIF-3) complex, which is involved in protein synthesis of a specialized repertoire of mRNAs and, together with other initiation factors, stimulates binding of mRNA and methionyl-tRNAi to the 40S ribosome. The eIF-3 complex specifically targets and initiates translation of a subset of mRNAs involved in cell proliferation. This chain is Eukaryotic translation initiation factor 3 subunit B (prt1), found in Sclerotinia sclerotiorum (strain ATCC 18683 / 1980 / Ss-1) (White mold).